The chain runs to 136 residues: SPbeta prophage-derived uncharacterized protein YonI (136 aa).

The protein is SPbeta prophage-derived uncharacterized protein YonI (yonI) of Bacillus subtilis (strain 168).